A 150-amino-acid chain; its full sequence is Arginine repressor (150 aa).

The protein belongs to the ArgR family.

Its subcellular location is the cytoplasm. Its pathway is amino-acid biosynthesis; L-arginine biosynthesis [regulation]. Functionally, regulates arginine biosynthesis genes. The polypeptide is Arginine repressor (Carboxydothermus hydrogenoformans (strain ATCC BAA-161 / DSM 6008 / Z-2901)).